Reading from the N-terminus, the 170-residue chain is Large ribosomal subunit protein uL11 (170 aa).

The protein belongs to the universal ribosomal protein uL11 family. In terms of assembly, part of the ribosomal stalk of the 50S ribosomal subunit. Interacts with L10 and the large rRNA to form the base of the stalk. L10 forms an elongated spine to which L12 dimers bind in a sequential fashion forming a multimeric L10(L12)X complex.

Forms part of the ribosomal stalk which helps the ribosome interact with GTP-bound translation factors. This is Large ribosomal subunit protein uL11 from Saccharolobus solfataricus (strain ATCC 35092 / DSM 1617 / JCM 11322 / P2) (Sulfolobus solfataricus).